The primary structure comprises 561 residues: ATP-dependent rRNA helicase RRP3 (561 aa).

Low complexity-rich tracts occupy residues 1 to 23 and 30 to 45; these read MPKASASSAKMTASTSNVSSSNS and ASSPSASPEVSTPSTS. Residues 1–109 form a disordered region; the sequence is MPKASASSAK…DEKKVATIAD (109 aa). The span at 100 to 109 shows a compositional bias: basic and acidic residues; the sequence is DEKKVATIAD. The short motif at 114-142 is the Q motif element; sequence VEFSDLGVIPQIVEACTNMGFKHPTPIQV. In terms of domain architecture, Helicase ATP-binding spans 145-316; sequence IPEALQARDV…RASLKNPVRV (172 aa). 158-165 is an ATP binding site; it reads AQTGSGKT. The DEAD box motif lies at 264 to 267; it reads DEAD. One can recognise a Helicase C-terminal domain in the interval 339–487; it reads HKDTYLVHLA…EFPGGNDKEA (149 aa). Residues 506–561 form a disordered region; sequence LKDKGVGSAGGSGKRKRKMDGKYGDDMDRDDDQVQAGLPVSGNGRHQNQNRKKGRR.

The protein belongs to the DEAD box helicase family. DDX47/RRP3 subfamily. Interacts with the SSU processome.

It localises to the nucleus. It catalyses the reaction ATP + H2O = ADP + phosphate + H(+). ATP-dependent rRNA helicase required for pre-ribosomal RNA processing. Involved in the maturation of the 35S-pre-rRNA and to its cleavage to mature 18S rRNA. This is ATP-dependent rRNA helicase RRP3 from Mycosarcoma maydis (Corn smut fungus).